A 339-amino-acid chain; its full sequence is Paired box protein Pax-9 (339 aa).

Residues 2–128 (AFGEVNQLGG…SSISRILRNK (127 aa)) constitute a DNA-binding region (paired). The segment at 5-61 (EVNQLGGVFVNGRPLPNAIRLRIVELAQLGIRPCDISRQLRVSHGCVSKILARYNET) is PAI subdomain. Positions 80–128 (TVVKHIRTYKQRDPGIFAWEIRDRLLADGVCDKYNVPSVSSISRILRNK) are RED subdomain.

It is found in the nucleus. This is Paired box protein Pax-9 (PAX9) from Gallus gallus (Chicken).